Reading from the N-terminus, the 299-residue chain is Ankyrin repeat domain-containing protein 54 (299 aa).

The tract at residues 1-32 (MAAAAGGADDESRSGRSSSDGECAVAPEPLTG) is disordered. At Ala-2 the chain carries N-acetylalanine. A phosphoserine mark is found at Ser-57 and Ser-62. A Nuclear localization signal (NLS) motif is present at residues 98 to 116 (RRLGPTGKEVHALKRLRDS). 4 ANK repeats span residues 108–137 (HALK…DPCA), 141–170 (KGRT…DPNQ), 174–203 (LGNT…RVDA), and 207–239 (AGRT…EVKQ). The interval 140 to 240 (DKGRTALHFA…EAVRLEVKQI (101 aa)) is LYN-binding. The Nuclear export signal (NES) signature appears at 282–292 (LLASFTSLSLQ).

Interacts (via ankyrin repeat region) with LYN (via SH3-domain) in an activation-independent status of LYN. Forms a multiprotein complex with LYN and HCLS1. Interacts with TSN2, VAV1, DBNL and LASP1.

The protein localises to the nucleus. Its subcellular location is the cytoplasm. The protein resides in the midbody. Functionally, plays an important role in regulating intracellular signaling events associated with erythroid terminal differentiation. In Bos taurus (Bovine), this protein is Ankyrin repeat domain-containing protein 54 (ANKRD54).